Reading from the N-terminus, the 230-residue chain is Leucyl/phenylalanyl-tRNA--protein transferase (230 aa).

This sequence belongs to the L/F-transferase family.

Its subcellular location is the cytoplasm. The catalysed reaction is N-terminal L-lysyl-[protein] + L-leucyl-tRNA(Leu) = N-terminal L-leucyl-L-lysyl-[protein] + tRNA(Leu) + H(+). It catalyses the reaction N-terminal L-arginyl-[protein] + L-leucyl-tRNA(Leu) = N-terminal L-leucyl-L-arginyl-[protein] + tRNA(Leu) + H(+). It carries out the reaction L-phenylalanyl-tRNA(Phe) + an N-terminal L-alpha-aminoacyl-[protein] = an N-terminal L-phenylalanyl-L-alpha-aminoacyl-[protein] + tRNA(Phe). Functionally, functions in the N-end rule pathway of protein degradation where it conjugates Leu, Phe and, less efficiently, Met from aminoacyl-tRNAs to the N-termini of proteins containing an N-terminal arginine or lysine. The chain is Leucyl/phenylalanyl-tRNA--protein transferase from Proteus mirabilis (strain HI4320).